Consider the following 887-residue polypeptide: Fibroblast growth factor receptor 2 (887 aa).

Positions 1-18 (MLNKFIVIVTMLAMWNYA) are cleaved as a signal peptide. Topologically, residues 19–416 (QDCNFELSKN…KDCVGNSYFT (398 aa)) are extracellular. Ig-like C2-type domains follow at residues 22–115 (NFEL…EFIS) and 180–260 (VSGS…LRMK). N-linked (GlcNAc...) asparagine glycans are attached at residues asparagine 28, asparagine 74, asparagine 93, asparagine 230, asparagine 261, asparagine 268, asparagine 328, asparagine 334, and asparagine 364. Cysteine 43 and cysteine 104 are disulfide-bonded. An Ig-like C2-type 3 domain is found at 297–387 (FNLNSRVCIN…YACRIINFKD (91 aa)). The cysteines at positions 313 and 380 are disulfide-linked. Residues 417–437 (IIWYSISVGIIILVVISFLII) form a helical membrane-spanning segment. At 438–887 (RLYNKYSNGY…SNQCYSTTIV (450 aa)) the chain is on the cytoplasmic side. Residues 585 to 862 (LIIGSKIGEG…IIDKLTHIQL (278 aa)) enclose the Protein kinase domain. ATP-binding positions include 591 to 599 (IGEGAFGIV) and lysine 619. The active-site Proton acceptor is aspartate 728. At tyrosine 757 the chain carries Phosphotyrosine; by autocatalysis.

This sequence belongs to the protein kinase superfamily. Tyr protein kinase family. Fibroblast growth factor receptor subfamily. Expressed in brain, stem cells and the mesenchymal cells.

It is found in the membrane. It catalyses the reaction L-tyrosyl-[protein] + ATP = O-phospho-L-tyrosyl-[protein] + ADP + H(+). Functionally, receptor for basic fibroblast growth factor. The polypeptide is Fibroblast growth factor receptor 2 (FGFR2) (Dugesia japonica (Planarian)).